Reading from the N-terminus, the 320-residue chain is Annexin A5 (320 aa).

Ala-2 bears the N-acetylalanine mark. Annexin repeat units follow at residues 15–86 (FDER…ALMK), 87–158 (PSRL…VLLQ), 170–242 (AQVE…AVVK), and 246–317 (SIPA…LLCG). Lys-29 is covalently cross-linked (Glycyl lysine isopeptide (Lys-Gly) (interchain with G-Cter in SUMO1); alternate). Residue Lys-29 forms a Glycyl lysine isopeptide (Lys-Gly) (interchain with G-Cter in SUMO2); alternate linkage. Ser-37 is subject to Phosphoserine. N6-acetyllysine occurs at positions 70, 76, 79, 97, and 101. Lys-290 carries the N6-succinyllysine modification. The [IL]-x-C-x-x-[DE] motif motif lies at 314-319 (LLCGED).

It belongs to the annexin family. In terms of assembly, monomer. Binds ATRX and EIF5B. Interacts with hepatitis B virus (HBV). In terms of processing, S-nitrosylation is induced by interferon-gamma and oxidatively-modified low-densitity lipoprotein (LDL(ox)) possibly implicating the iNOS-S100A8/9 transnitrosylase complex.

Functionally, this protein is an anticoagulant protein that acts as an indirect inhibitor of the thromboplastin-specific complex, which is involved in the blood coagulation cascade. This Homo sapiens (Human) protein is Annexin A5 (ANXA5).